We begin with the raw amino-acid sequence, 301 residues long: Developmental pluripotency-associated protein 2 (301 aa).

The tract at residues 31-85 (KEEEEPNTDYATQSNVSSSTLDHTPPARSLVRHAGIKHPTRTIPSTCPPPSLPPI) is disordered. Over residues 39–52 (DYATQSNVSSSTLD) the composition is skewed to polar residues. Positions 60–70 (LVRHAGIKHPT) are enriched in basic residues. An SAP domain is found at 85–119 (IRDVSRNTLREWCRYHNLSTDGKKVEVYLRLRRHS).

As to quaternary structure, interacts with DPPA4. As to expression, not detected in adult tissues.

It is found in the nucleus. Binds to target gene promoters, including NKX2-5 and SYCE1, but not GATA4, and may be involved in the maintenance of the active epigenetic status of these genes. This is Developmental pluripotency-associated protein 2 (Dppa2) from Mus musculus (Mouse).